The chain runs to 330 residues: HTH-type transcriptional regulator GanR (330 aa).

The HTH lacI-type domain occupies 2–57; the sequence is ATIKDIAQEAGFSISTVSRVLNNDESLSVPDETREKIYEAAEKLNYRKKTVRPLVK. The segment at residues 4–23 is a DNA-binding region (H-T-H motif); that stretch reads IKDIAQEAGFSISTVSRVLN.

In terms of biological role, negatively regulates the expression of the ganSPQAB operon. Inhibits transcription of the operon by binding to an operator in the promoter region. In the presence of galactobiose, GanR dissociates from the promoter, resulting in the expression of the gan operon. In Bacillus subtilis (strain 168), this protein is HTH-type transcriptional regulator GanR.